Reading from the N-terminus, the 34-residue chain is Turripeptide Pal9a (34 aa).

3 disulfide bridges follow: cysteine 3-cysteine 17, cysteine 8-cysteine 19, and cysteine 13-cysteine 30. Glutamine 34 is modified (glutamine amide).

In terms of tissue distribution, expressed by the venom duct.

The protein localises to the secreted. In Polystira albida (White giant-turris), this protein is Turripeptide Pal9a.